Consider the following 219-residue polypeptide: UPF0502 protein Swoo_2055 (219 aa).

The tract at residues 167–195 (QVKGESVPISEHSRSQREAPSKRQDEMDE) is disordered. A compositionally biased stretch (basic and acidic residues) spans 177–191 (EHSRSQREAPSKRQD).

The protein belongs to the UPF0502 family.

This is UPF0502 protein Swoo_2055 from Shewanella woodyi (strain ATCC 51908 / MS32).